Here is a 304-residue protein sequence, read N- to C-terminus: tRNA-uridine aminocarboxypropyltransferase 1 (304 aa).

A disordered region spans residues 1–30; it reads MALSPSVVPQESEENNANCVETKQSQTAST. The segment covering 15-30 has biased composition (polar residues); the sequence is NNANCVETKQSQTAST. Residues 206 to 209 carry the DXTW motif; that stretch reads DSTW.

The protein belongs to the TDD superfamily. DTWD1 family.

It is found in the nucleus. It carries out the reaction a uridine in tRNA + S-adenosyl-L-methionine = a 3-[(3S)-3-amino-3-carboxypropyl]uridine in tRNA + S-methyl-5'-thioadenosine + H(+). In terms of biological role, catalyzes the formation of 3-(3-amino-3-carboxypropyl)uridine (acp3U) at position 20 in the D-loop of several cytoplasmic tRNAs (acp3U(20)). This chain is tRNA-uridine aminocarboxypropyltransferase 1, found in Rattus norvegicus (Rat).